The chain runs to 844 residues: Receptor-like protein 49 (844 aa).

The first 31 residues, 1–31, serve as a signal peptide directing secretion; that stretch reads MMYSCRERRMITVKWSLCLIFCLSNSILVFA. At 32-803 the chain is on the extracellular side; sequence KHLCLPDQRD…QDEEKEEEEQ (772 aa). N-linked (GlcNAc...) asparagine glycans are attached at residues asparagine 59, asparagine 95, asparagine 112, and asparagine 159. LRR repeat units follow at residues 102 to 126, 136 to 160, 161 to 183, 185 to 208, 209 to 231, 242 to 265, 266 to 290, 292 to 313, 315 to 339, 345 to 362, 363 to 385, 386 to 409, 410 to 434, 436 to 457, 458 to 481, 482 to 504, 506 to 527, 528 to 551, 553 to 574, 575 to 601, 602 to 625, 665 to 689, 690 to 713, 714 to 737, and 739 to 762; these read QHLQ…GLKG, LKYL…LGNL, SYLT…SMGN, NYLR…LGNL, SYLA…SMGN, LNSL…NMSS, LSKL…LFMI, SLVE…NISS, SKLQ…IFSP, YLDV…VSLP, SPIE…LRNQ, TKLY…LWSL, PELQ…VIQG, GELY…LLPV, DSMN…ICEL, DNLV…CFEN, HLYV…EAIS, DRLQ…LINC, ALEF…WLEL, LPNF…SLSF, PRLR…YFAP, FTIY…ISLL, KELI…LSNL, SNLQ…LGEL, and FLAR…QIQT. The N-linked (GlcNAc...) asparagine glycan is linked to asparagine 207. The N-linked (GlcNAc...) asparagine glycan is linked to asparagine 262. Asparagine 310 is a glycosylation site (N-linked (GlcNAc...) asparagine). Residues asparagine 374 and asparagine 384 are each glycosylated (N-linked (GlcNAc...) asparagine). A glycan (N-linked (GlcNAc...) asparagine) is linked at asparagine 416. Asparagine 493, asparagine 516, and asparagine 550 each carry an N-linked (GlcNAc...) asparagine glycan. N-linked (GlcNAc...) asparagine glycans are attached at residues asparagine 696 and asparagine 712. Asparagine 744 carries N-linked (GlcNAc...) asparagine glycosylation. A helical transmembrane segment spans residues 804–824; that stretch reads VFSWIAAAIGYVPGVVCGLTI. Over 825–844 the chain is Cytoplasmic; it reads GHILVSHKRDWFMRIVSLFT.

It belongs to the RLP family.

The protein localises to the cell membrane. The polypeptide is Receptor-like protein 49 (Arabidopsis thaliana (Mouse-ear cress)).